The sequence spans 204 residues: MRFVLPKGRLYQDSIKVLELAGIKVPKRDERALIWGDGNNEFLLARAFDVPVYVEHGIDIGIAGSDVVEERGSDVFIPLELPFGKCRLSIAVPKEKVVDPENMDGYKIATKYPNITKRYFENLNIEVEVIKLHGSIELAPRIGIADAIVDIVETGNTLRSNGLVEVAKIMDVSALLLVNRISQKMFFEEINSFITKIRRSVYGH.

It belongs to the ATP phosphoribosyltransferase family. Short subfamily.

Its subcellular location is the cytoplasm. It catalyses the reaction 1-(5-phospho-beta-D-ribosyl)-ATP + diphosphate = 5-phospho-alpha-D-ribose 1-diphosphate + ATP. It functions in the pathway amino-acid biosynthesis; L-histidine biosynthesis; L-histidine from 5-phospho-alpha-D-ribose 1-diphosphate: step 1/9. Functionally, catalyzes the condensation of ATP and 5-phosphoribose 1-diphosphate to form N'-(5'-phosphoribosyl)-ATP (PR-ATP). Has a crucial role in the pathway because the rate of histidine biosynthesis seems to be controlled primarily by regulation of HisG enzymatic activity. This chain is ATP phosphoribosyltransferase (hisG), found in Pyrococcus furiosus (strain ATCC 43587 / DSM 3638 / JCM 8422 / Vc1).